A 260-amino-acid polypeptide reads, in one-letter code: Indole-3-glycerol phosphate synthase (260 aa).

It belongs to the TrpC family.

It catalyses the reaction 1-(2-carboxyphenylamino)-1-deoxy-D-ribulose 5-phosphate + H(+) = (1S,2R)-1-C-(indol-3-yl)glycerol 3-phosphate + CO2 + H2O. It functions in the pathway amino-acid biosynthesis; L-tryptophan biosynthesis; L-tryptophan from chorismate: step 4/5. This Staphylococcus haemolyticus (strain JCSC1435) protein is Indole-3-glycerol phosphate synthase.